Reading from the N-terminus, the 293-residue chain is NAD-dependent protein deacetylase (293 aa).

A Deacetylase sirtuin-type domain is found at 1–284 (MTVAITQTGP…QPPDPLHTAT (284 aa)). NAD(+)-binding positions include 27–47 (GAGC…GGWK) and 105–108 (QNVD). The active-site Proton acceptor is His123. Zn(2+) contacts are provided by Cys131, Cys134, Cys182, and Cys185. NAD(+) contacts are provided by residues 222-224 (GSS), 248-250 (NFG), and Cys266.

It belongs to the sirtuin family. Class II subfamily. Zn(2+) is required as a cofactor.

The protein resides in the cytoplasm. It catalyses the reaction N(6)-acetyl-L-lysyl-[protein] + NAD(+) + H2O = 2''-O-acetyl-ADP-D-ribose + nicotinamide + L-lysyl-[protein]. Functionally, NAD-dependent protein deacetylase which modulates the activities of several enzymes which are inactive in their acetylated form. The protein is NAD-dependent protein deacetylase of Xanthomonas campestris pv. campestris (strain 8004).